We begin with the raw amino-acid sequence, 1263 residues long: MELPKEIEEYFEMLQREIDKAYEIAKKARSQGKDPSTDVEIPQATDMAGRVESLVGPPGVAQRIRELLKEYDKEIVALKIVDEIIEGKFGDFGSKEKYAEQAVRTALAILTEGIVSAPLEGIADVKIKRNTWADNSEYLALYYAGPIRSSGGTAQALSVLVGDYVRRKLGLDRFKPSGKHIERMVEEVDLYHRAVSRLQYHPSPDEVRLAMRNIPIEITGEATDDVEVSHRDVEGVETNQLRGGAILVLAEGVLQKAKKLVKYIDKMGIDGWEWLKEFVEAKEKGEEIEESESKAEESKVETRVEVEKGFYYKLYEKFRAEIAPSEKYAKEIIGGRPLFAGPSENGGFRLRYGRSRVSGFATWSINPATMVLVDEFLAIGTQMKTERPGKGAVVTPATTAEGPIVKLKDGSVVRVDDYNLALKIRDEVEEILYLGDAIIAFGDFVENNQTLLPANYVEEWWIQEFVKAVNEAYEVELRPFEENPRESVEEAAEYLEVDPEFLAKMLYDPLRVKPPVELAIHFSEILEIPLHPYYTLYWNTVNPKDVERLWGVLKDKATIEWGTFRGIKFAKKIEISLDDLGSLKRTLELLGLPHTVREGIVVVDYPWSAALLTPLGNLEWEFKAKPFYTVIDIINENNQIKLRDRGISWIGARMGRPEKAKERKMKPPVQVLFPIGLAGGSSRDIKKAAEEGKIAEVEIAFFKCPKCGHVGPETLCPECGIRKELIWTCPKCGAEYTNSQAEGYSYSCPKCNVKLKPFTKRKIKPSELLNRAMENVKVYGVDKLKGVMGMTSGWKIAEPLEKGLLRAKNEVYVFKDGTIRFDATDAPITHFRPREIGVSVEKLRELGYTHDFEGKPLVSEDQIVELKPQDVILSKEAGKYLLRVARFVDDLLEKFYGLPRFYNAEKMEDLIGHLVIGLAPHTSAGIVGRIIGFVDALVGYAHPYFHAAKRRNCDGDEDSVMLLLDALLNFSRYYLPEKRGGKMDAPLVITTRLDPREVDSEVHNMDVVRYYPLEFYEATYELKSPKELVGVIERVEDRLGKPEMYYGIKFTHDTDDIALGPKMSLYKQLGDMEEKVKRQLTLAERIRAVDQHYVAETILNSHLIPDLRGNLRSFTRQEFRCVKCNTKYRRPPLDGKCPVCGGKIVLTVSKGAIEKYLGTAKMLVANYNVKPYTRQRICLTEKDIDSLFEYLFPEAQLTLIVDPNDICMKMIKERTGETVQGGLLENFNSSGNNGKKIEKKEKKAKEKPKKKKVISLDDFFSKR.

Residues 1224–1250 (LENFNSSGNNGKKIEKKEKKAKEKPKK) form a disordered region. The span at 1235-1244 (KKIEKKEKKA) shows a compositional bias: basic and acidic residues.

This sequence belongs to the archaeal DNA polymerase II family. In terms of assembly, heterodimer of a large subunit and a small subunit.

The enzyme catalyses DNA(n) + a 2'-deoxyribonucleoside 5'-triphosphate = DNA(n+1) + diphosphate. It carries out the reaction Exonucleolytic cleavage in the 3'- to 5'-direction to yield nucleoside 5'-phosphates.. Possesses two activities: a DNA synthesis (polymerase) and an exonucleolytic activity that degrades single-stranded DNA in the 3'- to 5'-direction. Has a template-primer preference which is characteristic of a replicative DNA polymerase. The chain is DNA polymerase II large subunit (polC) from Pyrococcus furiosus (strain ATCC 43587 / DSM 3638 / JCM 8422 / Vc1).